We begin with the raw amino-acid sequence, 94 residues long: MIMKNCLLLGALLMGFTGVAMAQSVTVDVPSGYKVVVVPDSVSVPQAVSVATVPQTVYVAPAPAPAYRPHPYVRHLASVGEGMVIEHQIDDHHH.

An N-terminal signal peptide occupies residues 1-22 (MIMKNCLLLGALLMGFTGVAMA).

This is an uncharacterized protein from Escherichia coli (strain K12).